The primary structure comprises 793 residues: Splicing factor 3A subunit 1 (793 aa).

The tract at residues 1–42 (MPAGPVQAVPPPPPAATEPKQPTEEEASSKEDSTPSKPVVGI) is disordered. Lys20 participates in a covalent cross-link: Glycyl lysine isopeptide (Lys-Gly) (interchain with G-Cter in SUMO2). Residues 21 to 34 (QPTEEEASSKEDST) are compositionally biased toward basic and acidic residues. One copy of the SURP motif 1 repeat lies at 52 to 94 (IVDKTASFVARNGPEFEARIRQNEINNPKFNFLNPNDPYHAYY). Position 55 is an N6-acetyllysine (Lys55). A Glycyl lysine isopeptide (Lys-Gly) (interchain with G-Cter in SUMO2) cross-link involves residue Lys131. The SURP motif 2 repeat unit spans residues 166–208 (VVKLTAQFVARNGRQFLTQLMQKEQRNYQFDFLRPQHSLFNYF). The segment at 318–412 (GESEEVEMEV…PAPAPDEYLV (95 aa)) is disordered. Ser320, Ser329, and Ser359 each carry phosphoserine. 2 stretches are compositionally biased toward acidic residues: residues 320 to 334 (SEEV…EEDE) and 354 to 364 (DMDEGSDDEEE). The segment covering 368-384 (VPPPPETPMPPPLPPTP) has biased composition (pro residues). A compositionally biased stretch (basic and acidic residues) spans 388–397 (IVRKDYDPKA). The residue at position 413 (Ser413) is a Phosphoserine. Lys424 is covalently cross-linked (Glycyl lysine isopeptide (Lys-Gly) (interchain with G-Cter in SUMO2)). Ser451 is subject to Phosphoserine. Phosphotyrosine is present on Tyr456. Residues 488 to 502 (IGEEEIQKPEEKVTW) are compositionally biased toward basic and acidic residues. 3 disordered regions span residues 488-518 (IGEE…AAQA), 530-584 (HKAK…AMPP), and 666-685 (PMPP…SKKL). Residue Lys499 forms a Glycyl lysine isopeptide (Lys-Gly) (interchain with G-Cter in SUMO2) linkage. Phosphoserine is present on Ser508. The segment covering 509-518 (MARTQQAAQA) has biased composition (polar residues). Residue Lys542 forms a Glycyl lysine isopeptide (Lys-Gly) (interchain with G-Cter in SUMO2) linkage. Positions 563 to 572 (ATNIPSSAPP) are enriched in polar residues. Residues 666-675 (PMPPVHPPPP) are compositionally biased toward pro residues. Residues 680–702 (PASKKLKTEDSLMPEEEFLRRNK) form a required and sufficient for nuclear import region. A Glycyl lysine isopeptide (Lys-Gly) (interchain with G-Cter in SUMO2) cross-link involves residue Lys686. The Ubiquitin-like domain occupies 707-793 (IKVQVPNMQD…ALKERGGRKK (87 aa)). Tyr759 bears the Phosphotyrosine mark.

Component of the 17S U2 SnRNP complex, a ribonucleoprotein complex that contains small nuclear RNA (snRNA) U2 and a number of specific proteins. Part of the SF3A subcomplex of the 17S U2 SnRNP complex which is composed of three subunits; SF3A3/SAP61, SF3A2/SAP62 and SF3A1/SAP114. SF3A associates with the splicing factor SF3B and a 12S RNA unit to form the mature 17S U2 small nuclear ribonucleoprotein complex (17S U2 snRNP). SF3A1 functions as a scaffold that interacts directly with both SF3A2 and SF3A3. Identified in the spliceosome 'E' complex, a precursor of the spliceosome 'A' complex. Identified in the spliceosome 'A' and 'B' complexes. Identified in the spliceosome 'C' complex. Interacts with P2RX6; resulting in a reduction of the splicing activity.

It is found in the nucleus. The protein localises to the nucleus speckle. Component of the 17S U2 SnRNP complex of the spliceosome, a large ribonucleoprotein complex that removes introns from transcribed pre-mRNAs. The 17S U2 SnRNP complex (1) directly participates in early spliceosome assembly and (2) mediates recognition of the intron branch site during pre-mRNA splicing by promoting the selection of the pre-mRNA branch-site adenosine, the nucleophile for the first step of splicing. Within the 17S U2 SnRNP complex, SF3A1 is part of the SF3A subcomplex that contributes to the assembly of the 17S U2 snRNP, and the subsequent assembly of the pre-spliceosome 'E' complex and the pre-catalytic spliceosome 'A' complex. Involved in pre-mRNA splicing as a component of pre-catalytic spliceosome 'B' complexes. In Bos taurus (Bovine), this protein is Splicing factor 3A subunit 1 (SF3A1).